We begin with the raw amino-acid sequence, 493 residues long: Adenylyltransferase and sulfurtransferase uba4 (493 aa).

ATP is bound by residues Gly99, Asp120, 127–131 (SNLHR), Lys144, and 188–189 (DN). Residues Cys237 and Cys240 each coordinate Zn(2+). The active-site Glycyl thioester intermediate; for adenylyltransferase activity is the Cys254. 2 residues coordinate Zn(2+): Cys316 and Cys319. The region spanning 376-491 (INKEPTIIDV…WREQIDPDWP (116 aa)) is the Rhodanese domain. The active-site Cysteine persulfide intermediate; for sulfurtransferase activity is Cys446.

This sequence in the N-terminal section; belongs to the HesA/MoeB/ThiF family. UBA4 subfamily. It depends on Zn(2+) as a cofactor.

It is found in the cytoplasm. It localises to the cytosol. The catalysed reaction is [molybdopterin-synthase sulfur-carrier protein]-C-terminal Gly-Gly + ATP + H(+) = [molybdopterin-synthase sulfur-carrier protein]-C-terminal Gly-Gly-AMP + diphosphate. It carries out the reaction [molybdopterin-synthase sulfur-carrier protein]-C-terminal Gly-Gly-AMP + S-sulfanyl-L-cysteinyl-[cysteine desulfurase] + AH2 = [molybdopterin-synthase sulfur-carrier protein]-C-terminal-Gly-aminoethanethioate + L-cysteinyl-[cysteine desulfurase] + A + AMP + 2 H(+). The protein operates within tRNA modification; 5-methoxycarbonylmethyl-2-thiouridine-tRNA biosynthesis. It functions in the pathway cofactor biosynthesis; molybdopterin biosynthesis. In terms of biological role, plays a central role in 2-thiolation of mcm(5)S(2)U at tRNA wobble positions of cytosolic tRNA(Lys), tRNA(Glu) and tRNA(Gln). Also essential during biosynthesis of the molybdenum cofactor. Acts by mediating the C-terminal thiocarboxylation of sulfur carriers urm1 and mocs2a. Its N-terminus first activates urm1 and mocs2a as acyl-adenylates (-COAMP), then the persulfide sulfur on the catalytic cysteine is transferred to urm1 and mocs2a to form thiocarboxylation (-COSH) of their C-terminus. The reaction probably involves hydrogen sulfide that is generated from the persulfide intermediate and that acts as a nucleophile towards urm1 and mocs2a. Subsequently, a transient disulfide bond is formed. Does not use thiosulfate as sulfur donor; nfs1 probably acting as a sulfur donor for thiocarboxylation reactions. The protein is Adenylyltransferase and sulfurtransferase uba4 of Aspergillus fumigatus (strain ATCC MYA-4609 / CBS 101355 / FGSC A1100 / Af293) (Neosartorya fumigata).